The following is a 261-amino-acid chain: MPRFALLIEYDGSPFAGWQAQAERPSVQSTIEAALGRLDPGFAAGARIAAAGRTDAGVHATGQVAHADLARDWDPFRLSEALNWHLKPAPVAILAAARVADDFHARFSAHERRYLFRLVARRAPLTHDRGRAWQVPHRLDLAAMRAGAAHLLGRHDFTTFRSTMCQANSPVKTLDELTIDEAEIPQGREYRFFLRARSFLHNQVRSIVGTLERVGAGAWPPGRVAEALAACDRAACGPVCPPQGLYLTGVGYETPPFSDSR.

Residue Asp-55 is the Nucleophile of the active site. Tyr-114 contacts substrate.

This sequence belongs to the tRNA pseudouridine synthase TruA family. In terms of assembly, homodimer.

The catalysed reaction is uridine(38/39/40) in tRNA = pseudouridine(38/39/40) in tRNA. Formation of pseudouridine at positions 38, 39 and 40 in the anticodon stem and loop of transfer RNAs. This is tRNA pseudouridine synthase A from Paracoccus denitrificans (strain Pd 1222).